A 419-amino-acid chain; its full sequence is Isocitrate dehydrogenase [NADP] 1 (419 aa).

Thr-105 is an NADP(+) binding site. 5 residues coordinate D-threo-isocitrate: Ser-114, Asn-116, Arg-120, Arg-130, and Arg-154. Mg(2+) is bound at residue Asp-308. Residues 340 to 346 (HGTAPKY), Asn-353, Tyr-392, and Arg-396 each bind NADP(+).

Belongs to the isocitrate and isopropylmalate dehydrogenases family. Homodimer. The cofactor is Mg(2+). Mn(2+) serves as cofactor.

The catalysed reaction is D-threo-isocitrate + NADP(+) = 2-oxoglutarate + CO2 + NADPH. With respect to regulation, IDH activity is not significantly affected by monovalent cations. The combined addition of Mn(2+) and another divalent cation results in the decrease of the activity. Functionally, catalyzes the oxidative decarboxylation of isocitrate to 2-oxoglutarate and carbon dioxide with the concomitant reduction of NADP(+). Cannot use NAD(+). The protein is Isocitrate dehydrogenase [NADP] 1 of Psychrobacter sp. (strain 13A).